The chain runs to 81 residues: UPF0181 protein Spro_2806 (81 aa).

Positions 43 to 81 (EKHQGDQVSVMFDDEDDDEEYQERPDDQADDDSEEDENY) are disordered. 2 stretches are compositionally biased toward acidic residues: residues 54–63 (FDDEDDDEEY) and 70–81 (QADDDSEEDENY).

This sequence belongs to the UPF0181 family.

The sequence is that of UPF0181 protein Spro_2806 from Serratia proteamaculans (strain 568).